A 1344-amino-acid chain; its full sequence is Period circadian protein homolog 2 (1344 aa).

Disordered stretches follow at residues 1-21 (MDCI…PEQQ) and 42-112 (EYSG…NGKD). Residues 10 to 21 (YSSTEEQNPEQQ) are compositionally biased toward polar residues. Positions 78 to 89 (SSGSSGNDFSGN) are enriched in low complexity. The segment covering 99 to 111 (HDSHGHESDENGK) has biased composition (basic and acidic residues). Residues 161 to 170 (LLKTLQELKA) carry the Nuclear export signal 1 motif. The 68-residue stretch at 231 to 298 (ITSEYIMKNA…FYTSTTPYRL (68 aa)) folds into the PAS 1 domain. Residues 358 to 362 (LCCVL) carry the LXXLL motif. One can recognise a PAS 2 domain in the interval 371 to 437 (YEAPRIPPDK…MLAIHKKILQ (67 aa)). Residues 445 to 488 (YSPIRFCTRNGDYITMDTSWSSFINPWSRKVSFIIGRHKVRTGP) enclose the PAC domain. The Nuclear export signal 2 signature appears at 512-521 (ITEQIYRLLL). 5 disordered regions span residues 531-609 (GYGS…QVKD), 661-686 (AKRK…NAIQ), 823-894 (LQDK…WSPS), 1038-1065 (TETR…PLFQ), and 1107-1126 (TTDA…MDAQ). Over residues 549-559 (SSSDSTGNNND) the composition is skewed to low complexity. Composition is skewed to basic and acidic residues over residues 560-573 (DTQK…DARK) and 583-597 (TENK…EPSA). Residues 667–684 (PSSSVNSSVHEQKASVNA) show a composition bias toward polar residues. Residues 825-836 (DKPKGRPGERGG) are compositionally biased toward basic and acidic residues. Residues 851 to 865 (KKSGKNRKSKRIKPQ) carry the Nuclear localization signal motif. Basic residues predominate over residues 852–862 (KSGKNRKSKRI). Composition is skewed to polar residues over residues 865-875 (QESSDSTTSGT), 885-894 (GLNTTAWSPS), and 1045-1059 (SRSC…QDQA). An LXXLL motif is present at residues 1138–1142 (LDILL). Residues 1149 to 1172 (GTGSASSGSGVSAAAESLGSGSNG) are compositionally biased toward low complexity. The interval 1149-1197 (GTGSASSGSGVSAAAESLGSGSNGCDMSGSRTGSSETSHTSKYFGSIDS) is disordered. The segment covering 1177-1197 (GSRTGSSETSHTSKYFGSIDS) has biased composition (polar residues). The interval 1244 to 1344 (SRDLETVLKE…PLSQVNEEQT (101 aa)) is CRY binding domain.

In terms of assembly, component of the circadian clock oscillator which includes the CRY proteins, CLOCK or NPAS2, BMAL1 or BMAL2, CSNK1E, and the PER proteins. Interacts directly with PER3, and through a C-terminal domain, with CRY1 and CRY2.

It localises to the nucleus. The protein localises to the cytoplasm. In terms of biological role, transcriptional repressor which forms a core component of the circadian clock. The circadian clock, an internal time-keeping system, regulates various physiological processes through the generation of approximately 24 hour circadian rhythms in gene expression, which are translated into rhythms in metabolism and behavior. It is derived from the Latin roots 'circa' (about) and 'diem' (day) and acts as an important regulator of a wide array of physiological functions including metabolism, sleep, body temperature, blood pressure, endocrine, immune, cardiovascular, and renal function. Consists of two major components: the central clock, residing in the suprachiasmatic nucleus (SCN) of the brain, and the peripheral clocks that are present in nearly every tissue and organ system. Both the central and peripheral clocks can be reset by environmental cues, also known as Zeitgebers (German for 'timegivers'). The predominant Zeitgeber for the central clock is light, which is sensed by retina and signals directly to the SCN. The central clock entrains the peripheral clocks through neuronal and hormonal signals, body temperature and feeding-related cues, aligning all clocks with the external light/dark cycle. Circadian rhythms allow an organism to achieve temporal homeostasis with its environment at the molecular level by regulating gene expression to create a peak of protein expression once every 24 hours to control when a particular physiological process is most active with respect to the solar day. Transcription and translation of core clock components (CLOCK, NPAS2, BMAL1, BMAL2, PER1, PER2, PER3, CRY1 and CRY2) plays a critical role in rhythm generation, whereas delays imposed by post-translational modifications (PTMs) are important for determining the period (tau) of the rhythms (tau refers to the period of a rhythm and is the length, in time, of one complete cycle). A diurnal rhythm is synchronized with the day/night cycle, while the ultradian and infradian rhythms have a period shorter and longer than 24 hours, respectively. Disruptions in the circadian rhythms contribute to the pathology of cardiovascular diseases, cancer, metabolic syndrome and aging. A transcription/translation feedback loop (TTFL) forms the core of the molecular circadian clock mechanism. Transcription factors, CLOCK or NPAS2 and BMAL1 or BMAL2, form the positive limb of the feedback loop, act in the form of a heterodimer and activate the transcription of core clock genes and clock-controlled genes (involved in key metabolic processes), harboring E-box elements (5'-CACGTG-3') within their promoters. The core clock genes: PER1/2/3 and CRY1/2 which are transcriptional repressors form the negative limb of the feedback loop and interact with the CLOCK|NPAS2-BMAL1|BMAL2 heterodimer inhibiting its activity and thereby negatively regulating their own expression. This heterodimer also activates nuclear receptors NR1D1/2 and RORA/B/G, which form a second feedback loop and which activate and repress BMAL1 transcription, respectively. PER1 and PER2 proteins transport CRY1 and CRY2 into the nucleus with appropriate circadian timing, but also contribute directly to repression of clock-controlled target genes through interaction with several classes of RNA-binding proteins, helicases and others transcriptional repressors. PER appears to regulate circadian control of transcription by at least three different modes. First, interacts directly with the CLOCK-BMAL1 at the tail end of the nascent transcript peak to recruit complexes containing the SIN3-HDAC that remodel chromatin to repress transcription. Second, brings H3K9 methyltransferases such as SUV39H1 and SUV39H2 to the E-box elements of the circadian target genes, like PER2 itself or PER1. The recruitment of each repressive modifier to the DNA seems to be very precisely temporally orchestrated by the large PER complex, the deacetylases acting before than the methyltransferases. Additionally, large PER complexes are also recruited to the target genes 3' termination site through interactions with RNA-binding proteins and helicases that may play a role in transcription termination to regulate transcription independently of CLOCK-BMAL1 interactions. This chain is Period circadian protein homolog 2 (PER2), found in Gallus gallus (Chicken).